Here is a 408-residue protein sequence, read N- to C-terminus: Elongation factor Tu, chloroplastic (408 aa).

The region spanning 10–214 is the tr-type G domain; sequence KPHVNIGTIG…AVDSYIPTPK (205 aa). The segment at 19 to 26 is G1; sequence GHVDHGKT. Position 19-26 (19-26) interacts with GTP; it reads GHVDHGKT. Thr26 is a Mg(2+) binding site. The tract at residues 60–64 is G2; the sequence is GITIN. Positions 81–84 are G3; sequence DCPG. Residues 81-85 and 136-139 each bind GTP; these read DCPGH and NKED. Residues 136 to 139 are G4; sequence NKED. Residues 174–176 are G5; it reads SAL.

Belongs to the TRAFAC class translation factor GTPase superfamily. Classic translation factor GTPase family. EF-Tu/EF-1A subfamily.

It is found in the plastid. Its subcellular location is the chloroplast. The enzyme catalyses GTP + H2O = GDP + phosphate + H(+). Its function is as follows. GTP hydrolase that promotes the GTP-dependent binding of aminoacyl-tRNA to the A-site of ribosomes during protein biosynthesis. This chain is Elongation factor Tu, chloroplastic (tufA), found in Chara connivens (Convergent stonewort).